A 137-amino-acid chain; its full sequence is Ribonuclease VapC51 (137 aa).

Positions 5 to 120 constitute a PINc domain; it reads YLLDTSVIKR…HYDADFDLIA (116 aa). Mg(2+)-binding residues include D8 and D95.

It belongs to the PINc/VapC protein family. It depends on Mg(2+) as a cofactor.

Its function is as follows. Toxic component of a type II toxin-antitoxin (TA) system. An RNase. Its cognate antitoxin is VapB51. In Mycobacterium tuberculosis (strain ATCC 25618 / H37Rv), this protein is Ribonuclease VapC51.